Reading from the N-terminus, the 337-residue chain is uncharacterized protein (337 aa).

29–36 (GPKSSGKS) is a binding site for ATP.

The protein belongs to the archaeal ATPase family.

This is an uncharacterized protein from Methanocaldococcus jannaschii (strain ATCC 43067 / DSM 2661 / JAL-1 / JCM 10045 / NBRC 100440) (Methanococcus jannaschii).